Here is a 659-residue protein sequence, read N- to C-terminus: UvrABC system protein B (659 aa).

The Helicase ATP-binding domain occupies 27–414 (EGLEQNKKSQ…AHGEIVKQII (388 aa)). ATP is bound at residue 40-47 (GVTGSGKT). Residues 93-116 (YFDYYRPEAYMPNTDTYIDKTTKS) carry the Beta-hairpin motif. The Helicase C-terminal domain maps to 432–594 (QVEDMFDEIQ…IIPKTIIKPI (163 aa)). The UVR domain occupies 624 to 659 (EALVKDLRNQMLDASKQLNFERAAELRDIILELEAN).

Belongs to the UvrB family. In terms of assembly, forms a heterotetramer with UvrA during the search for lesions. Interacts with UvrC in an incision complex.

Its subcellular location is the cytoplasm. Its function is as follows. The UvrABC repair system catalyzes the recognition and processing of DNA lesions. A damage recognition complex composed of 2 UvrA and 2 UvrB subunits scans DNA for abnormalities. Upon binding of the UvrA(2)B(2) complex to a putative damaged site, the DNA wraps around one UvrB monomer. DNA wrap is dependent on ATP binding by UvrB and probably causes local melting of the DNA helix, facilitating insertion of UvrB beta-hairpin between the DNA strands. Then UvrB probes one DNA strand for the presence of a lesion. If a lesion is found the UvrA subunits dissociate and the UvrB-DNA preincision complex is formed. This complex is subsequently bound by UvrC and the second UvrB is released. If no lesion is found, the DNA wraps around the other UvrB subunit that will check the other stand for damage. The sequence is that of UvrABC system protein B from Mycoplasma mobile (strain ATCC 43663 / 163K / NCTC 11711) (Mesomycoplasma mobile).